We begin with the raw amino-acid sequence, 318 residues long: Trans-prenyltransferase (318 aa).

Residues 1-21 traverse the membrane as a helical segment; the sequence is MLHLIYISIIVVLIIILISYT. Isopentenyl diphosphate-binding residues include Lys85, Arg88, and His122. Mg(2+) contacts are provided by Asp129 and Asp135. Arg140 is a dimethylallyl diphosphate binding site. Residue Arg141 participates in isopentenyl diphosphate binding. Residues Lys216, Thr217, and Gln254 each contribute to the dimethylallyl diphosphate site.

Belongs to the FPP/GGPP synthase family. Asfivirus trans-prenyltransferase subfamily. Mg(2+) is required as a cofactor.

It is found in the host endoplasmic reticulum. The protein resides in the host membrane. The enzyme catalyses isopentenyl diphosphate + dimethylallyl diphosphate = (2E)-geranyl diphosphate + diphosphate. It carries out the reaction isopentenyl diphosphate + (2E)-geranyl diphosphate = (2E,6E)-farnesyl diphosphate + diphosphate. It catalyses the reaction isopentenyl diphosphate + (2E,6E)-farnesyl diphosphate = (2E,6E,10E)-geranylgeranyl diphosphate + diphosphate. The catalysed reaction is isopentenyl diphosphate + (2E,6E,10E)-geranylgeranyl diphosphate = (2E,6E,10E,14E)-geranylfarnesyl diphosphate + diphosphate. It participates in isoprenoid biosynthesis; farnesyl diphosphate biosynthesis; farnesyl diphosphate from geranyl diphosphate and isopentenyl diphosphate: step 1/1. The protein operates within isoprenoid biosynthesis; geranyl diphosphate biosynthesis; geranyl diphosphate from dimethylallyl diphosphate and isopentenyl diphosphate: step 1/1. It functions in the pathway isoprenoid biosynthesis; geranylgeranyl diphosphate biosynthesis; geranylgeranyl diphosphate from farnesyl diphosphate and isopentenyl diphosphate: step 1/1. Functionally, trans-prenyltransferase that catalyzes the sequential condensation of isopentenyl diphosphate (IPP) with different allylic diphosphates, such as dimethylallyl diphosphate (DMAPP), geranyl diphosphate (GPP), farnesyl diphosphate (FPP) and geranylgeranyl diphosphate (GGPP), farnesyl diphosphate being the best allylic substrate. This is Trans-prenyltransferase from African swine fever virus (isolate Tick/South Africa/Pretoriuskop Pr4/1996) (ASFV).